Consider the following 313-residue polypeptide: Olfactory receptor 5D18 (313 aa).

At 1 to 26 (MLLTDRNTSGTTFTLLGFSDYPELQV) the chain is on the extracellular side. Asparagine 7 carries N-linked (GlcNAc...) asparagine glycosylation. A helical transmembrane segment spans residues 27-47 (PLFLVFLAIYNVTVLGNIGLI). Residues 48-55 (VIIKINPK) lie on the Cytoplasmic side of the membrane. A helical transmembrane segment spans residues 56–76 (LHTPMYFFLSQLSFVDFCYSS). The Extracellular segment spans residues 77–100 (IIAPKMLVNLVVKDRTISFLGCVV). A disulfide bridge links cysteine 98 with cysteine 190. A helical transmembrane segment spans residues 101–121 (QFFFFCTFVVTESFLLAVMAY). Over 122 to 140 (DRFVAICNPLLYTVNMSQK) the chain is Cytoplasmic. The chain crosses the membrane as a helical span at residues 141-161 (LCVLLVVGSYAWGVSCSLELT). Residues 162–197 (CSALKLCFHGFNTINHFFCEFSSLLSLSCSDTYINQ) lie on the Extracellular side of the membrane. Residues 198–218 (WLLFFLATFNEISTLLIVLTS) form a helical membrane-spanning segment. Residues 219–238 (YAFIVVTILKMRSVSGRRKA) are Cytoplasmic-facing. Residues 239-259 (FSTCASHLTAITIFHGTILFL) traverse the membrane as a helical segment. Over 260–272 (YCVPNSKNSRHTV) the chain is Extracellular. The helical transmembrane segment at 273 to 293 (KVASVFYTVVIPMLNPLIYSL) threads the bilayer. The Cytoplasmic portion of the chain corresponds to 294 to 313 (RNKDVKDTVTEILDTKVFSY).

The protein belongs to the G-protein coupled receptor 1 family.

The protein resides in the cell membrane. Functionally, odorant receptor. The polypeptide is Olfactory receptor 5D18 (OR5D18) (Homo sapiens (Human)).